The primary structure comprises 193 residues: Putative deoxynucleotide monophosphate kinase (193 aa).

Position 10 (Lys-10) interacts with dGMP. ATP contacts are provided by Gly-13 and Thr-16. Residues Leu-36, Lys-37, Lys-58, Asp-122, Arg-124, Glu-128, and Ser-155 each coordinate dGMP.

The protein belongs to the dNMP kinase family.

The catalysed reaction is a 2'-deoxyribonucleoside 5'-phosphate + ATP = a 2'-deoxyribonucleoside 5'-diphosphate + ADP. This is Putative deoxynucleotide monophosphate kinase from Acanthamoeba polyphaga mimivirus (APMV).